We begin with the raw amino-acid sequence, 78 residues long: RNA-binding protein Hfq (78 aa).

Positions 10–69 constitute a Sm domain; sequence DPFLNTLRKEHVPVSIYLVNGIKLQGQIESFDQYVVLLRNTVTQMVYKHAISTVVPARAV.

The protein belongs to the Hfq family. As to quaternary structure, homohexamer.

RNA chaperone that binds small regulatory RNA (sRNAs) and mRNAs to facilitate mRNA translational regulation in response to envelope stress, environmental stress and changes in metabolite concentrations. Also binds with high specificity to tRNAs. The sequence is that of RNA-binding protein Hfq from Bordetella bronchiseptica (strain ATCC BAA-588 / NCTC 13252 / RB50) (Alcaligenes bronchisepticus).